A 703-amino-acid chain; its full sequence is Lethal(3)malignant brain tumor-like protein 2 (703 aa).

The tract at residues 1–70 (MEKPRGTEET…AGELPTSPLH (70 aa)) is disordered. Phosphoserine is present on Ser13. Residues 15–25 (PMEEEEDDDLE) are compositionally biased toward acidic residues. Low complexity predominate over residues 35-49 (SYNSSAGSESSSYLE). Positions 50 to 60 (ESSEAENEDRE) are enriched in acidic residues. Position 67 is a phosphoserine (Ser67). Residues 81-116 (DGSGSEPAVCEMCGIVGTREAFFSKTKRFCSVSCSR) form an FCS-type zinc finger. Positions 90, 93, 110, and 114 each coordinate Zn(2+). 4 MBT repeats span residues 179 to 283 (FDWG…LVPP), 291 to 391 (TDWK…IKMS), 397 to 500 (MSHH…LTPP), and 508 to 604 (FDWE…LQPP). Ser338 carries the post-translational modification Phosphoserine. Lys405 participates in a covalent cross-link: Glycyl lysine isopeptide (Lys-Gly) (interchain with G-Cter in SUMO2). Disordered regions lie at residues 604–649 (PVSA…KKPL) and 672–703 (VKEE…ERDS). The segment covering 619–634 (TKKKKKQFGKKRKRIP) has biased composition (basic residues). Residues Lys647 and Lys673 each participate in a glycyl lysine isopeptide (Lys-Gly) (interchain with G-Cter in SUMO2) cross-link. A phosphoserine mark is found at Ser681, Ser685, and Ser687. A Glycyl lysine isopeptide (Lys-Gly) (interchain with G-Cter in SUMO1); alternate cross-link involves residue Lys698. Residue Lys698 forms a Glycyl lysine isopeptide (Lys-Gly) (interchain with G-Cter in SUMO2); alternate linkage.

As to quaternary structure, part of the E2F6.com-1 complex in G0 phase composed of E2F6, MGA, MAX, TFDP1, CBX3, BAT8, EUHMTASE1, RING1, RNF2, MBLR, BAT8 and YAF2.

It is found in the nucleus. Putative Polycomb group (PcG) protein. PcG proteins maintain the transcriptionally repressive state of genes, probably via a modification of chromatin, rendering it heritably changed in its expressibility. Its association with a chromatin-remodeling complex suggests that it may contribute to prevent expression of genes that trigger the cell into mitosis. Binds to monomethylated and dimethylated 'Lys-20' on histone H4. Binds histone H3 peptides that are monomethylated or dimethylated on 'Lys-4', 'Lys-9' or 'Lys-27'. This Rattus norvegicus (Rat) protein is Lethal(3)malignant brain tumor-like protein 2 (L3mbtl2).